A 331-amino-acid polypeptide reads, in one-letter code: 3'-5' exonuclease (331 aa).

Residues 27-92 are disordered; the sequence is ERVKQTNAAK…EDGPASPEKE (66 aa). Residues 31-43 show a composition bias toward polar residues; sequence QTNAAKKQIATNN. Over residues 47 to 67 the composition is skewed to basic and acidic residues; the sequence is KNQDTPEMIKDKENAESENPP. Ser80 and Ser88 each carry phosphoserine. Positions 118–290 constitute a 3'-5' exonuclease domain; it reads SADEVMQWVE…IGQVIYREIE (173 aa). Positions 140, 142, and 278 each coordinate Mg(2+).

Belongs to the WRNexo family.

Its subcellular location is the nucleus. Functionally, has exonuclease activity on both single-stranded and duplex templates bearing overhangs, but not blunt ended duplex DNA, and cleaves in a 3'-5' direction. Essential for the formation of DNA replication focal centers. Has an important role in maintaining genome stability. This Drosophila grimshawi (Hawaiian fruit fly) protein is 3'-5' exonuclease.